Reading from the N-terminus, the 383-residue chain is tRNA(Met) cytidine acetate ligase (383 aa).

Residues Ile7–Gln20, Gly102, Asn160, and Arg181–Ile182 contribute to the ATP site.

This sequence belongs to the TmcAL family.

Its subcellular location is the cytoplasm. It carries out the reaction cytidine(34) in elongator tRNA(Met) + acetate + ATP = N(4)-acetylcytidine(34) in elongator tRNA(Met) + AMP + diphosphate. Catalyzes the formation of N(4)-acetylcytidine (ac(4)C) at the wobble position of elongator tRNA(Met), using acetate and ATP as substrates. First activates an acetate ion to form acetyladenylate (Ac-AMP) and then transfers the acetyl group to tRNA to form ac(4)C34. This is tRNA(Met) cytidine acetate ligase from Exiguobacterium sibiricum (strain DSM 17290 / CCUG 55495 / CIP 109462 / JCM 13490 / 255-15).